A 473-amino-acid chain; its full sequence is Photosystem II CP43 reaction center protein (473 aa).

Positions Met-1–Glu-14 are excised as a propeptide. Thr-15 carries the N-acetylthreonine modification. A Phosphothreonine modification is found at Thr-15. A run of 5 helical transmembrane segments spans residues Leu-69 to Ala-93, Leu-134 to Asn-155, Lys-178 to Thr-200, Lys-255 to Ser-275, and Trp-291 to Ala-312. Glu-367 provides a ligand contact to [CaMn4O5] cluster. A helical membrane pass occupies residues Arg-447–Pro-471.

This sequence belongs to the PsbB/PsbC family. PsbC subfamily. In terms of assembly, PSII is composed of 1 copy each of membrane proteins PsbA, PsbB, PsbC, PsbD, PsbE, PsbF, PsbH, PsbI, PsbJ, PsbK, PsbL, PsbM, PsbT, PsbX, PsbY, PsbZ, Psb30/Ycf12, at least 3 peripheral proteins of the oxygen-evolving complex and a large number of cofactors. It forms dimeric complexes. It depends on Binds multiple chlorophylls and provides some of the ligands for the Ca-4Mn-5O cluster of the oxygen-evolving complex. It may also provide a ligand for a Cl- that is required for oxygen evolution. PSII binds additional chlorophylls, carotenoids and specific lipids. as a cofactor.

It is found in the plastid. The protein localises to the chloroplast thylakoid membrane. One of the components of the core complex of photosystem II (PSII). It binds chlorophyll and helps catalyze the primary light-induced photochemical processes of PSII. PSII is a light-driven water:plastoquinone oxidoreductase, using light energy to abstract electrons from H(2)O, generating O(2) and a proton gradient subsequently used for ATP formation. The sequence is that of Photosystem II CP43 reaction center protein from Gossypium hirsutum (Upland cotton).